The primary structure comprises 203 residues: High frequency lysogenization protein HflD homolog (203 aa).

Belongs to the HflD family.

It is found in the cytoplasm. It localises to the cell inner membrane. The polypeptide is High frequency lysogenization protein HflD homolog (Dichelobacter nodosus (strain VCS1703A)).